The primary structure comprises 625 residues: Autophagy-related protein 13b (625 aa).

Low complexity-rich tracts occupy residues 322–332 and 455–477; these read PSVSCSPSPTR and PSGV…SSRS. Disordered stretches follow at residues 322-388, 452-527, and 544-564; these read PSVS…AVPR, FRRP…YPKK, and PPLR…NNNK. Positions 498–518 are enriched in basic and acidic residues; that stretch reads ITDRNSRPGSFDHRGDIHEPF.

It belongs to the ATG13 family. Plant subfamily.

It is found in the cytoplasmic vesicle. It localises to the autophagosome. Involved in autophagy in a nutritional condition dependent manner. The ATG1-ATG13 protein kinase complex regulates downstream events required for autophagosome enclosure and/or vacuolar delivery. Becomes a target of autophagy under nutrient starvation. Connects autophagy to plant nutritional status. The sequence is that of Autophagy-related protein 13b from Arabidopsis thaliana (Mouse-ear cress).